The following is a 374-amino-acid chain: tRNA-specific 2-thiouridylase MnmA (374 aa).

ATP-binding positions include 13 to 20 and M39; that span reads GMSGGVDS. Positions 99-101 are interaction with target base in tRNA; the sequence is NPD. Catalysis depends on C104, which acts as the Nucleophile. Residues C104 and C201 are joined by a disulfide bond. G128 provides a ligand contact to ATP. The tract at residues 151–153 is interaction with tRNA; it reads KDQ. C201 functions as the Cysteine persulfide intermediate in the catalytic mechanism. Positions 313–314 are interaction with tRNA; it reads RY.

It belongs to the MnmA/TRMU family.

It localises to the cytoplasm. The enzyme catalyses S-sulfanyl-L-cysteinyl-[protein] + uridine(34) in tRNA + AH2 + ATP = 2-thiouridine(34) in tRNA + L-cysteinyl-[protein] + A + AMP + diphosphate + H(+). Functionally, catalyzes the 2-thiolation of uridine at the wobble position (U34) of tRNA, leading to the formation of s(2)U34. The sequence is that of tRNA-specific 2-thiouridylase MnmA from Streptococcus equi subsp. zooepidemicus (strain H70).